A 269-amino-acid polypeptide reads, in one-letter code: Hydroxypyruvate/pyruvate aldolase (269 aa).

The active-site Proton acceptor is H48. A divalent metal cation is bound by residues E152 and D178.

The protein belongs to the HpcH/HpaI aldolase family. Requires a divalent metal cation as cofactor.

It catalyses the reaction D-glyceraldehyde + pyruvate = 2-dehydro-3-deoxy-L-galactonate. Aldolase which can catalyze in vitro the aldolisation reaction between hydroxypyruvate (HPA) or pyruvate (PA) and D-glyceraldehyde (D-GA). The condensation of pyruvate and D-glyceraldehyde produces 2-dehydro-3-deoxy-L-galactonate as the major product. Has weak activity with hydroxypyruvate and D-glyceraldehyde. The chain is Hydroxypyruvate/pyruvate aldolase from Delftia acidovorans (strain DSM 14801 / SPH-1).